A 612-amino-acid polypeptide reads, in one-letter code: Membrane protein insertase YidC (612 aa).

Transmembrane regions (helical) follow at residues 4–24 (NTII…YLNH), 329–349 (LVPL…IPIF), 358–378 (VNLG…LFPL), 434–454 (ILLQ…AIGL), 484–504 (FLGN…ILNT), 524–544 (LTMY…PAGL), and 546–566 (YYYL…RGLV).

Belongs to the OXA1/ALB3/YidC family. Type 1 subfamily. In terms of assembly, interacts with the Sec translocase complex via SecD. Specifically interacts with transmembrane segments of nascent integral membrane proteins during membrane integration.

It is found in the cell inner membrane. Required for the insertion and/or proper folding and/or complex formation of integral membrane proteins into the membrane. Involved in integration of membrane proteins that insert both dependently and independently of the Sec translocase complex, as well as at least some lipoproteins. Aids folding of multispanning membrane proteins. The sequence is that of Membrane protein insertase YidC from Azobacteroides pseudotrichonymphae genomovar. CFP2.